A 300-amino-acid chain; its full sequence is uncharacterized protein (300 aa).

Residues Met-1–Gly-7 lie on the Periplasmic side of the membrane. Residues Met-8–Ile-28 form a helical membrane-spanning segment. Residues Val-16–Thr-145 enclose the EamA 1 domain. Over Met-29 to Leu-45 the chain is Cytoplasmic. A helical transmembrane segment spans residues Phe-46–Leu-66. At Lys-67 to Asp-71 the chain is on the periplasmic side. The chain crosses the membrane as a helical span at residues Ala-72–Leu-92. At Thr-93–Ala-99 the chain is on the cytoplasmic side. The chain crosses the membrane as a helical span at residues Ala-100–Ala-120. Over Arg-121–Arg-124 the chain is Periplasmic. The chain crosses the membrane as a helical span at residues Pro-125–Thr-145. The Cytoplasmic segment spans residues His-146–Ser-151. Residues Leu-152–Tyr-172 form a helical membrane-spanning segment. One can recognise an EamA 2 domain in the interval Phe-167–Leu-291. Residues Thr-173 to Gly-184 lie on the Periplasmic side of the membrane. The chain crosses the membrane as a helical span at residues Thr-185–Ala-205. Over Lys-206–Ser-216 the chain is Cytoplasmic. The helical transmembrane segment at Leu-217 to Leu-237 threads the bilayer. The Periplasmic segment spans residues Lys-238–Ser-263. A helical membrane pass occupies residues Leu-264–Ser-284. The Cytoplasmic portion of the chain corresponds to Ser-285–Ala-300.

Belongs to the EamA transporter family.

Its subcellular location is the cell inner membrane. This is an uncharacterized protein from Salmonella typhimurium (strain LT2 / SGSC1412 / ATCC 700720).